The primary structure comprises 512 residues: Cytochrome P450 82C3 (512 aa).

The chain crosses the membrane as a helical span at residues methionine 1–phenylalanine 21. Heme is bound at residue cysteine 451.

This sequence belongs to the cytochrome P450 family. Requires heme as cofactor.

Its subcellular location is the membrane. The protein is Cytochrome P450 82C3 (CYP82C3) of Arabidopsis thaliana (Mouse-ear cress).